A 475-amino-acid polypeptide reads, in one-letter code: L-ornithine N(5)-monooxygenase (475 aa).

FAD contacts are provided by residues 65–73 and Gln-84; that span reads ERQPEFGWH. Lys-89 lines the substrate pocket. Val-150 contacts FAD. 238 to 241 serves as a coordination point for NADP(+); the sequence is GGQS. Substrate-binding positions include 277–280 and Asn-307; that span reads NEIF. 307 to 309 lines the NADP(+) pocket; sequence NYG. 446-448 lines the FAD pocket; that stretch reads SLL. Ser-449 is a substrate binding site.

The protein belongs to the lysine N(6)-hydroxylase/L-ornithine N(5)-oxygenase family. In terms of assembly, homotetramer. The cofactor is FAD.

It catalyses the reaction L-ornithine + NADPH + O2 = N(5)-hydroxy-L-ornithine + NADP(+) + H2O. The enzyme catalyses L-ornithine + NADH + O2 = N(5)-hydroxy-L-ornithine + NAD(+) + H2O. Its pathway is siderophore biosynthesis. Functionally, L-ornithine N(5)-monooxygenase; part of the gene cluster that mediates the biosynthesis of hydroxamate-containing siderophores that play a critical role in virulence via intracellular iron acquisition during macrophage infection. SID1 catalyzes the conversion of L-ornithine to N(5)-hydroxyornithine, the first step in the biosynthesis of all hydroxamate-containing siderophores. This Ajellomyces capsulatus (Darling's disease fungus) protein is L-ornithine N(5)-monooxygenase.